We begin with the raw amino-acid sequence, 443 residues long: Probable D-serine dehydratase (443 aa).

Lys116 is subject to N6-(pyridoxal phosphate)lysine.

This sequence belongs to the serine/threonine dehydratase family. DsdA subfamily. The cofactor is pyridoxal 5'-phosphate.

The catalysed reaction is D-serine = pyruvate + NH4(+). This chain is Probable D-serine dehydratase, found in Bacillus cereus (strain G9842).